A 549-amino-acid chain; its full sequence is S-methyl thiourocanate hydratase (549 aa).

NAD(+)-binding residues include Met49, Gly173, Met174, Gly175, Asp193, Ser198, Asn239, Ala240, Gln260, Val270, and Tyr318.

The protein belongs to the urocanase family. S-methyl thiourocanate hydratase subfamily. The cofactor is NAD(+).

It carries out the reaction S-methyl-(E)-thiourocanate + H2O = S-methyl-thiohydantoin-5-propanoate. Its function is as follows. Hydratase involved in the catabolism of S-methyl ergothioneine. Catalyzes the 1,4-addition of H(2)O to S-methyl thiourocanate, leading to the formation of S-methyl-thiohydantoin-5-propanoate, the second step in S-methyl ergothioneine degradation. Cannot use urocanate or thiourocanate as substrate. This chain is S-methyl thiourocanate hydratase, found in Variovorax sp. (strain JCM 16519 / RA8).